The sequence spans 650 residues: Chaperone protein HtpG (650 aa).

The interval 1–349 (MSKTVKKFET…SSDLPLNVSR (349 aa)) is a; substrate-binding. Residues 350–566 (EILQEDVQIK…EHGLNANMER (217 aa)) form a b region. The segment at 567-650 (ILRAMNQTVP…VADGKAAAGE (84 aa)) is c.

This sequence belongs to the heat shock protein 90 family. As to quaternary structure, homodimer.

The protein resides in the cytoplasm. Molecular chaperone. Has ATPase activity. The polypeptide is Chaperone protein HtpG (Geobacter sulfurreducens (strain ATCC 51573 / DSM 12127 / PCA)).